We begin with the raw amino-acid sequence, 227 residues long: Cytochrome c oxidase subunit 2 (227 aa).

The Mitochondrial intermembrane segment spans residues 1–14 (MAYPVQLGFQDAAS). The chain crosses the membrane as a helical span at residues 15 to 45 (PIMEELLYFHDHTLMIMFLISSLVLYIISLM). Residues 46–59 (LTTELIHTSTMDAQ) are Mitochondrial matrix-facing. Residues 60 to 87 (EVETVWTILPAVILILIALPSLRILYMM) form a helical membrane-spanning segment. Residues 88–227 (DEISTPSLTL…HFEEWLLSML (140 aa)) lie on the Mitochondrial intermembrane side of the membrane. Residues histidine 161, cysteine 196, glutamate 198, cysteine 200, histidine 204, and methionine 207 each coordinate Cu cation. Glutamate 198 provides a ligand contact to Mg(2+).

It belongs to the cytochrome c oxidase subunit 2 family. As to quaternary structure, component of the cytochrome c oxidase (complex IV, CIV), a multisubunit enzyme composed of 14 subunits. The complex is composed of a catalytic core of 3 subunits MT-CO1, MT-CO2 and MT-CO3, encoded in the mitochondrial DNA, and 11 supernumerary subunits COX4I, COX5A, COX5B, COX6A, COX6B, COX6C, COX7A, COX7B, COX7C, COX8 and NDUFA4, which are encoded in the nuclear genome. The complex exists as a monomer or a dimer and forms supercomplexes (SCs) in the inner mitochondrial membrane with NADH-ubiquinone oxidoreductase (complex I, CI) and ubiquinol-cytochrome c oxidoreductase (cytochrome b-c1 complex, complex III, CIII), resulting in different assemblies (supercomplex SCI(1)III(2)IV(1) and megacomplex MCI(2)III(2)IV(2)). Found in a complex with TMEM177, COA6, COX18, COX20, SCO1 and SCO2. Interacts with TMEM177 in a COX20-dependent manner. Interacts with COX20. Interacts with COX16. Cu cation serves as cofactor.

It is found in the mitochondrion inner membrane. The enzyme catalyses 4 Fe(II)-[cytochrome c] + O2 + 8 H(+)(in) = 4 Fe(III)-[cytochrome c] + 2 H2O + 4 H(+)(out). Its function is as follows. Component of the cytochrome c oxidase, the last enzyme in the mitochondrial electron transport chain which drives oxidative phosphorylation. The respiratory chain contains 3 multisubunit complexes succinate dehydrogenase (complex II, CII), ubiquinol-cytochrome c oxidoreductase (cytochrome b-c1 complex, complex III, CIII) and cytochrome c oxidase (complex IV, CIV), that cooperate to transfer electrons derived from NADH and succinate to molecular oxygen, creating an electrochemical gradient over the inner membrane that drives transmembrane transport and the ATP synthase. Cytochrome c oxidase is the component of the respiratory chain that catalyzes the reduction of oxygen to water. Electrons originating from reduced cytochrome c in the intermembrane space (IMS) are transferred via the dinuclear copper A center (CU(A)) of subunit 2 and heme A of subunit 1 to the active site in subunit 1, a binuclear center (BNC) formed by heme A3 and copper B (CU(B)). The BNC reduces molecular oxygen to 2 water molecules using 4 electrons from cytochrome c in the IMS and 4 protons from the mitochondrial matrix. The sequence is that of Cytochrome c oxidase subunit 2 (MT-CO2) from Eulemur macaco (Black lemur).